The chain runs to 495 residues: Glucose-6-phosphate 1-dehydrogenase (495 aa).

Serine 1 is modified (N-acetylserine). Residues glycine 15–arginine 22, arginine 49, and lysine 149 each bind NADP(+). Residues lysine 149, histidine 179–lysine 183, glutamate 217, and aspartate 236 each bind D-glucose 6-phosphate. The active-site Proton acceptor is the histidine 241. Arginine 332 is an NADP(+) binding site. Residue lysine 335 coordinates D-glucose 6-phosphate. 3 residues coordinate NADP(+): lysine 341, arginine 345, and arginine 367. Glutamine 369 is a D-glucose 6-phosphate binding site. NADP(+) is bound by residues tyrosine 375 to lysine 377, aspartate 395 to threonine 397, and lysine 463.

The protein belongs to the glucose-6-phosphate dehydrogenase family.

It carries out the reaction D-glucose 6-phosphate + NADP(+) = 6-phospho-D-glucono-1,5-lactone + NADPH + H(+). It functions in the pathway carbohydrate degradation; pentose phosphate pathway; D-ribulose 5-phosphate from D-glucose 6-phosphate (oxidative stage): step 1/3. Functionally, catalyzes the rate-limiting step of the oxidative pentose-phosphate pathway, which represents a route for the dissimilation of carbohydrates besides glycolysis. The main function of this enzyme is to provide reducing power (NADPH) and pentose phosphates for fatty acid and nucleic acid synthesis. The polypeptide is Glucose-6-phosphate 1-dehydrogenase (Cyberlindnera jadinii (Torula yeast)).